The sequence spans 610 residues: UvrABC system protein C (610 aa).

One can recognise a GIY-YIG domain in the interval 16–94 (SQPGVYRMYD…IKLYQPRYNV (79 aa)). The UVR domain occupies 204-239 (QQVLTQLITRMEEASQQLHFEDAARIRDQIQAVRRV).

The protein belongs to the UvrC family. As to quaternary structure, interacts with UvrB in an incision complex.

It localises to the cytoplasm. The UvrABC repair system catalyzes the recognition and processing of DNA lesions. UvrC both incises the 5' and 3' sides of the lesion. The N-terminal half is responsible for the 3' incision and the C-terminal half is responsible for the 5' incision. This Yersinia pseudotuberculosis serotype I (strain IP32953) protein is UvrABC system protein C.